A 693-amino-acid chain; its full sequence is Heat shock protein homolog SSE1 (693 aa).

Ser-2 carries the N-acetylserine modification. A Glycyl lysine isopeptide (Lys-Gly) (interchain with G-Cter in ubiquitin) cross-link involves residue Lys-195. At Thr-242 the chain carries Phosphothreonine. The tract at residues 653 to 693 (IRSKQEASQMAAMAEKLAAQRKAEAEKKEEKKDTEGDVDMD) is disordered. Phosphoserine is present on Ser-660. Residues 673–687 (RKAEAEKKEEKKDTE) are compositionally biased toward basic and acidic residues.

It belongs to the heat shock protein 70 family.

It is found in the cytoplasm. Has a calcium-dependent calmodulin-binding activity. Required for normal growth at various temperatures. This is Heat shock protein homolog SSE1 (SSE1) from Saccharomyces cerevisiae (strain ATCC 204508 / S288c) (Baker's yeast).